Reading from the N-terminus, the 235-residue chain is Sugar fermentation stimulation protein homolog (235 aa).

Belongs to the SfsA family.

In Alkaliphilus oremlandii (strain OhILAs) (Clostridium oremlandii (strain OhILAs)), this protein is Sugar fermentation stimulation protein homolog.